The primary structure comprises 101 residues: Protein mes1 (101 aa).

A compositionally biased stretch (basic and acidic residues) spans 1 to 19; sequence MVNTDNKENEPPNMEKAHM. Positions 1–101 are disordered; sequence MVNTDNKENE…RSPNPLLSMR (101 aa).

As to quaternary structure, interacts with slp1.

It localises to the cytoplasm. It is found in the nucleus. Functionally, specifically required for meiosis II (MII). Binds to slp1, an activator of the anapahase promoting complex/cyclcosome (APC/C), and counteracts its function in promoting proteolysis of cdc13. By suppressing the degradation of cdc13 at anaphase I this protein may help maintain a sufficient level of cdc2 kinase activity to complete MII. The polypeptide is Protein mes1 (mes1) (Schizosaccharomyces pombe (strain 972 / ATCC 24843) (Fission yeast)).